The chain runs to 58 residues: MTGAGTPSQGKKNTTTHVKCRRCGEKSYHTKKKVCSSCGFGKSAKRRDYEWSSKTGDN.

4 residues coordinate Zn(2+): Cys-20, Cys-23, Cys-35, and Cys-38. The segment at 20–38 adopts a C4-type zinc-finger fold; it reads CRRCGEKSYHTKKKVCSSC.

It belongs to the eukaryotic ribosomal protein eL37 family. Zn(2+) is required as a cofactor.

Binds to the 23S rRNA. The protein is Large ribosomal subunit protein eL37 of Haloquadratum walsbyi (strain DSM 16790 / HBSQ001).